A 173-amino-acid polypeptide reads, in one-letter code: Sialic acid TRAP transporter small permease protein SiaQ (173 aa).

The next 4 helical transmembrane spans lie at 13 to 33 (IEEIITVPLMAALLAVLTWQI), 46 to 66 (SEELARLLFMYMCLVGCAIAI), 87 to 107 (LSLVLSLEIAVLVSIGAIIVL), and 123 to 143 (LGISSSWMNYSLPVGGVFMVF).

This sequence belongs to the TRAP transporter small permease family. The complex comprises the extracytoplasmic solute receptor protein SiaP, and the two transmembrane proteins SiaQ and SiaM. SiaQ and SiaM form a tight 1:1 complex.

Its subcellular location is the cell inner membrane. Functionally, part of the tripartite ATP-independent periplasmic (TRAP) transport system SiaPQM that catalyzes unidirectional Na(+)-dependent sialic acid uptake. This chain is Sialic acid TRAP transporter small permease protein SiaQ, found in Vibrio cholerae serotype O1 (strain ATCC 39315 / El Tor Inaba N16961).